The primary structure comprises 513 residues: GMP synthase [glutamine-hydrolyzing] (513 aa).

Residues 9–198 (MILVLDFGSQ…VRRICDCTGE (190 aa)) enclose the Glutamine amidotransferase type-1 domain. Cys-86 functions as the Nucleophile in the catalytic mechanism. Active-site residues include His-172 and Glu-174. The region spanning 199 to 388 (WTMENFIDLE…LGIPEHLVWR (190 aa)) is the GMPS ATP-PPase domain. 226-232 (SGGVDSS) lines the ATP pocket.

As to quaternary structure, homodimer.

It carries out the reaction XMP + L-glutamine + ATP + H2O = GMP + L-glutamate + AMP + diphosphate + 2 H(+). Its pathway is purine metabolism; GMP biosynthesis; GMP from XMP (L-Gln route): step 1/1. Its function is as follows. Catalyzes the synthesis of GMP from XMP. The sequence is that of GMP synthase [glutamine-hydrolyzing] from Staphylococcus carnosus (strain TM300).